Consider the following 613-residue polypeptide: Activating transcription factor 3 (613 aa).

Disordered regions lie at residues 77–115 (RHFN…PSVQ) and 133–218 (KRKL…NKIA). Residues 85 to 105 (GQSHSQDSSHSSCSGSPLDSP) show a composition bias toward low complexity. Polar residues predominate over residues 138–147 (TCDSSSGSEQ). Residues 158–175 (NHNGHSGSSNNYSGSMSN) show a composition bias toward low complexity. Acidic residues predominate over residues 178 to 191 (DLDDDCEESSDDDS). The 64-residue stretch at 205-268 (EDRRRRRRER…QKLVDMLKSH (64 aa)) folds into the bZIP domain. The interval 207–229 (RRRRRRERNKIAATKCRMKKRER) is basic motif. A leucine-zipper region spans residues 233–261 (LIKESEVLDTQNVELKNQVRQLETERQKL). The segment at 337 to 446 (PNGYCKPSPS…SSNATSSTTP (110 aa)) is disordered. A compositionally biased stretch (low complexity) spans 356–368 (QQQQQQQQQQQPQ). Positions 369-389 (SLNPAGNNVIDQQHANPSPSL) are enriched in polar residues. Residues 402–446 (GSASNHPSHNNNNNNNNSSGASSNTSNNNSNISSHSSNATSSTTP) are compositionally biased toward low complexity.

The protein belongs to the bZIP family. ATF subfamily. In terms of assembly, interacts with Jra/jun; the interaction enhances the DNA-binding activity of Atf3. As to expression, moderate expression in some regions of the larval nervous system, the ring gland and imaginal disks. High expression in larval gut, excretory malpighian tubules, salivary glands, and, to a lesser extent, the fat body where levels are approximately 2.5-fold less than the gut.

Its subcellular location is the nucleus. Its function is as follows. Transcription factor which binds to the cAMP response element (CRE). Regulates metabolic and innate immune homeostasis, possibly by controlling appropriate expression of genes involved in peritrophic matrix composition and ensuring the normal digestive and immune function of the gut. Required for the expression of odorant receptors Or43b and Or47b. The polypeptide is Activating transcription factor 3 (Drosophila melanogaster (Fruit fly)).